The sequence spans 186 residues: Threonylcarbamoyl-AMP synthase (186 aa).

Positions Pro2–Ser186 constitute a YrdC-like domain.

The protein belongs to the SUA5 family. TsaC subfamily.

The protein resides in the cytoplasm. The enzyme catalyses L-threonine + hydrogencarbonate + ATP = L-threonylcarbamoyladenylate + diphosphate + H2O. Its function is as follows. Required for the formation of a threonylcarbamoyl group on adenosine at position 37 (t(6)A37) in tRNAs that read codons beginning with adenine. Catalyzes the conversion of L-threonine, HCO(3)(-)/CO(2) and ATP to give threonylcarbamoyl-AMP (TC-AMP) as the acyladenylate intermediate, with the release of diphosphate. The chain is Threonylcarbamoyl-AMP synthase from Aeromonas hydrophila subsp. hydrophila (strain ATCC 7966 / DSM 30187 / BCRC 13018 / CCUG 14551 / JCM 1027 / KCTC 2358 / NCIMB 9240 / NCTC 8049).